A 283-amino-acid chain; its full sequence is Short-chain dehydrogenase anuB (283 aa).

7 residues coordinate NADP(+): T57, D78, N106, Y166, K170, V199, and T201. The Proton acceptor role is filled by Y166. Y166 acts as the Proton donor in catalysis. Residue K170 is the Lowers pKa of active site Tyr of the active site.

Belongs to the short-chain dehydrogenases/reductases (SDR) family.

Its pathway is secondary metabolite biosynthesis. Its function is as follows. Highly reducing polyketide synthase; part of the gene cluster that mediates the biosynthesis of annullatin D, an alkylated aromatic polyketide with a fused dihydrobenzofuran lactone ring system that exhibits potent agonistic activities toward the cannabinoid receptors. The annullatin backbone 2-hydroxymethyl-3-pentylphenol is assembled from one acetyl-CoA starter unit and 5 malonyl-CoA elongation units by cooperation of the highly reducing polyketide synthase anuA, the short-chain dehydrogenase anuB and the oxidoreductase anuC, before being hydroxylated at the C-5 alkyl chain by the cytochrome P450 monooxygenase anuE to form (8S)-annullatin E. The prenyltransferase anuH subsequently installs one isoprenyl group at the benzene ring to form (8S)-annullatin J. Enzymatic or nonenzymatic dihydro-benzofuran ring formation between the prenyl and the phenolic hydroxyl groups in (8S)-annullatin J results in two diastereomers (2S,9S)-annullatin H and compound 12. The intermediate (2S,9S)-annullatin H is then converted to (2S,9S)-annullatin D by the FAD-linked oxidoreductase anuG-catalyzed five-member lactone ring formation. The isomer 12 acts as a substrate for the short-chain dehydrogenase anuF and is oxidized to (2R)-annullatin F, which is subsequently acetylated by an acetyltransferase leading to (2R)-annullatin G formation. The remaining enzymes identified within the cluster, anuD, anuI and anuJ, seem not to be involved in annullatin biosynthesis. In Penicillium roqueforti (strain FM164), this protein is Short-chain dehydrogenase anuB.